The primary structure comprises 1036 residues: Protein CLEC16A (1036 aa).

The FPL domain maps to 51–198 (IRSITEILIW…AVRTITLNVY (148 aa)). Disordered stretches follow at residues 375 to 416 (SLEM…DAEK), 437 to 458 (GTSV…NSEN), 876 to 967 (HSSP…PSLL), and 1008 to 1036 (SQLP…PTEH). The span at 381-392 (HKGKKRMQKRPN) shows a compositional bias: basic residues. Composition is skewed to low complexity over residues 877–891 (SSPS…FASG), 898–923 (STSH…APTT), and 943–954 (NSKPSKNSSARS).

The protein belongs to the CLEC16A/gop-1 family. Interacts with RNF41/NRDP1. As to expression, ubiquitously expressed. Expressed in pancreatic islets.

The protein localises to the endosome membrane. It is found in the lysosome membrane. Its function is as follows. Regulator of mitophagy through the upstream regulation of the RNF41/NRDP1-PRKN pathway. Mitophagy is a selective form of autophagy necessary for mitochondrial quality control. The RNF41/NRDP1-PRKN pathway regulates autophagosome-lysosome fusion during late mitophagy. May protect RNF41/NRDP1 from proteasomal degradation, RNF41/NRDP1 which regulates proteasomal degradation of PRKN. Plays a key role in beta cells functions by regulating mitophagy/autophagy and mitochondrial health. The protein is Protein CLEC16A of Mus musculus (Mouse).